Consider the following 882-residue polypeptide: Alanine--tRNA ligase (882 aa).

Positions 568, 572, 670, and 674 each coordinate Zn(2+).

The protein belongs to the class-II aminoacyl-tRNA synthetase family. The cofactor is Zn(2+).

It localises to the cytoplasm. The catalysed reaction is tRNA(Ala) + L-alanine + ATP = L-alanyl-tRNA(Ala) + AMP + diphosphate. In terms of biological role, catalyzes the attachment of alanine to tRNA(Ala) in a two-step reaction: alanine is first activated by ATP to form Ala-AMP and then transferred to the acceptor end of tRNA(Ala). Also edits incorrectly charged Ser-tRNA(Ala) and Gly-tRNA(Ala) via its editing domain. This Syntrophotalea carbinolica (strain DSM 2380 / NBRC 103641 / GraBd1) (Pelobacter carbinolicus) protein is Alanine--tRNA ligase.